The primary structure comprises 346 residues: MDISDFDFTLPEHLIAQHPPEVRGSSRLLVALSDMPLQDRVFGDLPDYVEAGDVLVFNNTKVMKARLFGQKDSGGRIEALIERVLDNHTALAHIRSSKSPKPGMGLVFEGGIRAVMVGREGELFCLRFEGGQTVYELLEQNGHLPLPPYIERAADADDDSRYQTVYAKYQGAVAAPTAGLHFTEELLRRLKDKGAVTAEVTLHVGAGTFQPVRVDKIEEHKMHSEWFEVPSETVAAVEAAKARGNKAWAVGTTSMRALESAARATGYLKDGQGDTDIFITPGYRFNVVDRLVTNFHLPKSTLLMLVGAFSGMGHIRAVYRHAIEREYRFFSYGDAMVLGRNEGGGL.

This sequence belongs to the QueA family. As to quaternary structure, monomer.

It is found in the cytoplasm. The catalysed reaction is 7-aminomethyl-7-carbaguanosine(34) in tRNA + S-adenosyl-L-methionine = epoxyqueuosine(34) in tRNA + adenine + L-methionine + 2 H(+). Its pathway is tRNA modification; tRNA-queuosine biosynthesis. Transfers and isomerizes the ribose moiety from AdoMet to the 7-aminomethyl group of 7-deazaguanine (preQ1-tRNA) to give epoxyqueuosine (oQ-tRNA). This is S-adenosylmethionine:tRNA ribosyltransferase-isomerase from Neisseria gonorrhoeae (strain ATCC 700825 / FA 1090).